The following is a 443-amino-acid chain: Phosphoglucosamine mutase (443 aa).

Residue S100 is the Phosphoserine intermediate of the active site. S100, D239, D241, and D243 together coordinate Mg(2+). The residue at position 100 (S100) is a Phosphoserine.

This sequence belongs to the phosphohexose mutase family. Mg(2+) serves as cofactor. Post-translationally, activated by phosphorylation.

It catalyses the reaction alpha-D-glucosamine 1-phosphate = D-glucosamine 6-phosphate. Catalyzes the conversion of glucosamine-6-phosphate to glucosamine-1-phosphate. The chain is Phosphoglucosamine mutase from Shewanella loihica (strain ATCC BAA-1088 / PV-4).